The sequence spans 358 residues: Aromatic amino acid aminotransferase (358 aa).

Lys214 is modified (N6-(pyridoxal phosphate)lysine).

It belongs to the class-II pyridoxal-phosphate-dependent aminotransferase family. As to quaternary structure, homodimer. The cofactor is pyridoxal 5'-phosphate.

The enzyme catalyses an aromatic L-alpha-amino acid + 2-oxoglutarate = an aromatic oxo-acid + L-glutamate. Its function is as follows. Aminotransferase that catalyzes the conversion of aromatic amino acids and 2-oxoglutarate into corresponding aromatic oxo acids and L-glutamate. The protein is Aromatic amino acid aminotransferase of Rhodococcus opacus (strain B4).